Reading from the N-terminus, the 374-residue chain is Protein RecA (374 aa).

66 to 73 (GPESSGKT) contributes to the ATP binding site. The disordered stretch occupies residues 327–374 (LGVGVHPEESATEPGADAASAAPADAAPAVPAPTTAKATKSKAAAAKS). Low complexity predominate over residues 338–374 (TEPGADAASAAPADAAPAVPAPTTAKATKSKAAAAKS).

The protein belongs to the RecA family.

The protein resides in the cytoplasm. Its function is as follows. Can catalyze the hydrolysis of ATP in the presence of single-stranded DNA, the ATP-dependent uptake of single-stranded DNA by duplex DNA, and the ATP-dependent hybridization of homologous single-stranded DNAs. It interacts with LexA causing its activation and leading to its autocatalytic cleavage. This is Protein RecA from Streptomyces lividans.